Reading from the N-terminus, the 321-residue chain is Glycerol-3-phosphate dehydrogenase [NAD(P)+] (321 aa).

NADPH contacts are provided by serine 14, phenylalanine 15, arginine 35, and lysine 109. Residues lysine 109 and glycine 137 each contribute to the sn-glycerol 3-phosphate site. Residue alanine 141 coordinates NADPH. Residues lysine 192, aspartate 252, serine 262, arginine 263, and asparagine 264 each coordinate sn-glycerol 3-phosphate. Lysine 192 functions as the Proton acceptor in the catalytic mechanism. Arginine 263 serves as a coordination point for NADPH. Residues leucine 287 and glutamate 289 each contribute to the NADPH site.

This sequence belongs to the NAD-dependent glycerol-3-phosphate dehydrogenase family.

It is found in the cytoplasm. It carries out the reaction sn-glycerol 3-phosphate + NAD(+) = dihydroxyacetone phosphate + NADH + H(+). The enzyme catalyses sn-glycerol 3-phosphate + NADP(+) = dihydroxyacetone phosphate + NADPH + H(+). The protein operates within membrane lipid metabolism; glycerophospholipid metabolism. In terms of biological role, catalyzes the reduction of the glycolytic intermediate dihydroxyacetone phosphate (DHAP) to sn-glycerol 3-phosphate (G3P), the key precursor for phospholipid synthesis. This is Glycerol-3-phosphate dehydrogenase [NAD(P)+] from Rickettsia felis (strain ATCC VR-1525 / URRWXCal2) (Rickettsia azadi).